A 91-amino-acid chain; its full sequence is Protein LURE 1.6 (91 aa).

A signal peptide spans 1–20 (MKLPFIFLITLLIFVSSCTS). 3 cysteine pairs are disulfide-bonded: Cys-59–Cys-76, Cys-62–Cys-83, and Cys-66–Cys-85.

Belongs to the DEFL family. Expressed in the pistil. Detected in the synergid cells.

It localises to the secreted. In terms of biological role, pollen tube attractants guiding pollen tubes to the ovular micropyle. This Arabidopsis thaliana (Mouse-ear cress) protein is Protein LURE 1.6.